The following is a 53-amino-acid chain: Large ribosomal subunit protein bL33A (53 aa).

Belongs to the bacterial ribosomal protein bL33 family.

The polypeptide is Large ribosomal subunit protein bL33A (rpmG1) (Mycoplasma pneumoniae (strain ATCC 29342 / M129 / Subtype 1) (Mycoplasmoides pneumoniae)).